A 372-amino-acid chain; its full sequence is Embryonic growth/differentiation factor 1 (372 aa).

Residues 1–29 form the signal peptide; that stretch reads MPPPQQGPCGHHLLLLLALLLPSLPLTRA. Residues 30–253 constitute a propeptide that is removed on maturation; the sequence is PVPPGPAAAL…LCHPLARPRR (224 aa). The tract at residues 67–86 is disordered; sequence RRRDPQETRSGSRRTSPGVT. An N-linked (GlcNAc...) asparagine glycan is attached at Asn-206. Cystine bridges form between Cys-267–Cys-337, Cys-296–Cys-369, and Cys-300–Cys-371.

Belongs to the TGF-beta family. As to quaternary structure, homodimer; disulfide-linked. As to expression, expressed in the brain.

It localises to the secreted. May mediate cell differentiation events during embryonic development. This chain is Embryonic growth/differentiation factor 1 (GDF1), found in Homo sapiens (Human).